The following is a 101-amino-acid chain: Putative pterin-4-alpha-carbinolamine dehydratase (101 aa).

It belongs to the pterin-4-alpha-carbinolamine dehydratase family.

The catalysed reaction is (4aS,6R)-4a-hydroxy-L-erythro-5,6,7,8-tetrahydrobiopterin = (6R)-L-erythro-6,7-dihydrobiopterin + H2O. The sequence is that of Putative pterin-4-alpha-carbinolamine dehydratase from Ralstonia pickettii (strain 12J).